A 63-amino-acid polypeptide reads, in one-letter code: Arabinogalactan protein 41 (63 aa).

An N-terminal signal peptide occupies residues 1–27; the sequence is MSGSRLFFGVSTIVSIIFAILLPMAHA. The residue at position 28 (Q28) is a Pyrrolidone carboxylic acid. A 4-hydroxyproline mark is found at P32, P34, and P36. 3 O-linked (Ara...) hydroxyproline glycosylation sites follow: P32, P34, and P36. Residue S38 is the site of GPI-anchor amidated serine attachment. Positions 39-63 are cleaved as a propeptide — removed in mature form; that stretch reads DGTTIDQGIAYVLMLVALVLTYLIH.

It belongs to the AG-peptide AGP family. Post-translationally, contains 4-hydroxyproline; hydroxylated on Pro-32, Pro-34 and Pro-36. O-glycosylated on hydroxyprolines; noncontiguous hydroxylproline residues are glycosylated with arabinogalactan.

The protein resides in the cell membrane. Functionally, proteoglycan that seems to be implicated in diverse developmental roles such as differentiation, cell-cell recognition, embryogenesis and programmed cell death. This chain is Arabinogalactan protein 41, found in Arabidopsis thaliana (Mouse-ear cress).